Reading from the N-terminus, the 140-residue chain is Phospholipase A2 (140 aa).

The N-terminal stretch at Met1–Ser21 is a signal peptide. A propeptide spanning residues Ile22–Leu27 is cleaved from the precursor. 7 disulfide bridges follow: Cys38–Cys97, Cys52–Cys139, Cys54–Cys70, Cys69–Cys125, Cys76–Cys118, Cys86–Cys111, and Cys104–Cys116. N-linked (GlcNAc...) asparagine glycosylation is present at Asn39. Ca(2+) is bound by residues Tyr53, Gly55, and Gly57. His73 is an active-site residue. Asp74 lines the Ca(2+) pocket. Asn107 carries N-linked (GlcNAc...) asparagine glycosylation. Asp119 is a catalytic residue.

This sequence belongs to the phospholipase A2 family. Group I subfamily. D49 sub-subfamily. Requires Ca(2+) as cofactor. In terms of tissue distribution, expressed by the venom gland.

Its subcellular location is the secreted. It carries out the reaction a 1,2-diacyl-sn-glycero-3-phosphocholine + H2O = a 1-acyl-sn-glycero-3-phosphocholine + a fatty acid + H(+). Functionally, PLA2 catalyzes the calcium-dependent hydrolysis of the 2-acyl groups in 3-sn-phosphoglycerides. This chain is Phospholipase A2, found in Micrurus altirostris (Uruguayan coral snake).